Consider the following 308-residue polypeptide: Olfactory receptor 5K1 (308 aa).

Residues 1–25 (MAEENHTMKNEFILTGFTDHPELKT) lie on the Extracellular side of the membrane. N-linked (GlcNAc...) asparagine glycosylation is present at Asn5. A helical transmembrane segment spans residues 26–46 (LLFVVFFAIYLITVVGNISLV). The Cytoplasmic portion of the chain corresponds to 47–54 (ALIFTHRR). The helical transmembrane segment at 55-75 (LHTPMYIFLGNLALVDSCCAC) threads the bilayer. Topologically, residues 76–99 (AITPKMLENFFSENKRISLYECAV) are extracellular. Cys97 and Cys189 form a disulfide bridge. A helical transmembrane segment spans residues 100 to 120 (QFYFLCTVETADCFLLAAMAY). The Cytoplasmic portion of the chain corresponds to 121 to 139 (DRYVAICNPLQYHIMMSKK). The chain crosses the membrane as a helical span at residues 140–160 (LCIQMTTGAFIAGNLHSMIHV). The Extracellular portion of the chain corresponds to 161-196 (GLVFRLVFCGSNHINHFYCDILPLYRLSCVDPYINE). A helical transmembrane segment spans residues 197-217 (LVLFIFSGSVQVFTIGSVLIS). Over 218 to 237 (YLYILLTIFKMKSKEGRAKA) the chain is Cytoplasmic. Residues 238-258 (FSTCASHFLSVSLFYGSLFFM) traverse the membrane as a helical segment. Over 259–271 (YVRPNLLEEGDKD) the chain is Extracellular. A helical transmembrane segment spans residues 272–292 (IPAAILFTIVVPLLNPFIYSL). At 293–308 (RNREVISVLRKILMKK) the chain is on the cytoplasmic side.

Belongs to the G-protein coupled receptor 1 family.

It is found in the cell membrane. Its function is as follows. Odorant receptor. The sequence is that of Olfactory receptor 5K1 (OR5K1) from Homo sapiens (Human).